A 429-amino-acid chain; its full sequence is Adenylosuccinate synthetase (429 aa).

Residues 12–18 (GDEGKGK) and 40–42 (GHT) each bind GTP. The active-site Proton acceptor is Asp13. Mg(2+) is bound by residues Asp13 and Gly40. IMP is bound by residues 13–16 (DEGK), 38–41 (NAGH), Thr128, Arg142, Gln223, Thr238, and Arg302. His41 acts as the Proton donor in catalysis. Residue 298 to 304 (VNTGRPR) participates in substrate binding. GTP contacts are provided by residues Arg304, 330–332 (KLD), and 412–414 (GVG).

The protein belongs to the adenylosuccinate synthetase family. As to quaternary structure, homodimer. It depends on Mg(2+) as a cofactor.

It is found in the cytoplasm. It carries out the reaction IMP + L-aspartate + GTP = N(6)-(1,2-dicarboxyethyl)-AMP + GDP + phosphate + 2 H(+). It participates in purine metabolism; AMP biosynthesis via de novo pathway; AMP from IMP: step 1/2. In terms of biological role, plays an important role in the de novo pathway of purine nucleotide biosynthesis. Catalyzes the first committed step in the biosynthesis of AMP from IMP. The polypeptide is Adenylosuccinate synthetase (Renibacterium salmoninarum (strain ATCC 33209 / DSM 20767 / JCM 11484 / NBRC 15589 / NCIMB 2235)).